A 154-amino-acid polypeptide reads, in one-letter code: Ribosome maturation factor RimP (154 aa).

The protein belongs to the RimP family.

The protein localises to the cytoplasm. In terms of biological role, required for maturation of 30S ribosomal subunits. This is Ribosome maturation factor RimP from Salmonella gallinarum (strain 287/91 / NCTC 13346).